The following is a 185-amino-acid chain: Hypoxanthine/guanine phosphoribosyltransferase (185 aa).

Belongs to the purine/pyrimidine phosphoribosyltransferase family. Archaeal HPRT subfamily. As to quaternary structure, homodimer.

The protein localises to the cytoplasm. It catalyses the reaction IMP + diphosphate = hypoxanthine + 5-phospho-alpha-D-ribose 1-diphosphate. It carries out the reaction GMP + diphosphate = guanine + 5-phospho-alpha-D-ribose 1-diphosphate. The protein operates within purine metabolism; IMP biosynthesis via salvage pathway; IMP from hypoxanthine: step 1/1. Functionally, catalyzes a salvage reaction resulting in the formation of IMP that is energically less costly than de novo synthesis. In Methanococcus maripaludis (strain C6 / ATCC BAA-1332), this protein is Hypoxanthine/guanine phosphoribosyltransferase.